Consider the following 1486-residue polypeptide: Alsin homolog (1486 aa).

RCC1 repeat units lie at residues 147-201, 256-307, and 308-363; these read QGVV…MLVA, HTQL…ARTL, and DGRL…LLNA. MORN repeat units follow at residues 744–765, 766–784, 789–804, 817–832, 839–853, and 863–884; these read CGTW…DGSV, YCGE…MVIP, YVGN…HGVY, YEGN…HGVM, YVGE…GYGV, and YMGM…NRGD. One can recognise a VPS9 domain in the interval 1333 to 1486; it reads SRKDEMYRQN…VTSRALQKIP (154 aa).

As to expression, in the embryo, expressed in a wide range of tissues including the epidermis and the ventral nerve cord.

Has guanine nucleotide exchange factor (GEF) activity towards Rab5. Promotes the exchange of GDP to GTP, converting inactive GDP-bound Rab5 into its active GTP-bound form. In Drosophila melanogaster (Fruit fly), this protein is Alsin homolog.